The sequence spans 954 residues: Kinesin-like protein KIN-7A (954 aa).

The interval Met-1–Arg-29 is disordered. Over residues Thr-17–Thr-28 the composition is skewed to low complexity. The Kinesin motor domain occupies Lys-34–Val-354. Position 119–126 (Gly-119–Thr-126) interacts with ATP. Coiled-coil stretches lie at residues Val-363–Gln-436 and Leu-480–Ser-588. 2 disordered regions span residues Pro-624 to Asn-689 and Gly-741 to Asp-762. Residues Pro-630 to Pro-639 are compositionally biased toward low complexity. Basic and acidic residues-rich tracts occupy residues Leu-640–Glu-660 and Lys-666–Arg-681.

This sequence belongs to the TRAFAC class myosin-kinesin ATPase superfamily. Kinesin family. KIN-7 subfamily. Ubiquitous with a preferential expression in the shoot apical meristem (SAM).

Its function is as follows. May be essential to promote the progression of cytokinesis during node-internode differentiation. This is Kinesin-like protein KIN-7A from Oryza sativa subsp. japonica (Rice).